Reading from the N-terminus, the 153-residue chain is Small ribosomal subunit protein uS19 (153 aa).

It belongs to the universal ribosomal protein uS19 family.

The chain is Small ribosomal subunit protein uS19 (RPS15) from Elaeis oleifera (American oil palm).